Consider the following 229-residue polypeptide: MKQFEGIKFIAFDLDGTLLDSVPDLAEAADKAMQALGRDRVTVEQVTTWIGNGADILIGRALSQSIELDPELDLALHQEARALFDRFYDEGGHKQSHLYAGVKETLAAFHQANIPMAIVTNKPAQFVPHLLEQHGISEYFVDVIGGDTFPLKKPDPFALHWLMEKHQLAACEMLMIGDSRNDILAAQAATCHVVGLTYGYNYGQPISASNPDVVLDQFSQLIDVVKLAC.

Asp-13 serves as the catalytic Nucleophile. Residues Asp-13, Asp-15, and Asp-178 each contribute to the Mg(2+) site.

The protein belongs to the HAD-like hydrolase superfamily. CbbY/CbbZ/Gph/YieH family. Mg(2+) is required as a cofactor.

It carries out the reaction 2-phosphoglycolate + H2O = glycolate + phosphate. It participates in organic acid metabolism; glycolate biosynthesis; glycolate from 2-phosphoglycolate: step 1/1. Specifically catalyzes the dephosphorylation of 2-phosphoglycolate. Is involved in the dissimilation of the intracellular 2-phosphoglycolate formed during the DNA repair of 3'-phosphoglycolate ends, a major class of DNA lesions induced by oxidative stress. The sequence is that of Phosphoglycolate phosphatase from Photobacterium profundum (strain SS9).